The following is a 939-amino-acid chain: Valine--tRNA ligase (939 aa).

Positions 47–57 (PNVTGILHMGH) match the 'HIGH' region motif. The 'KMSKS' region signature appears at 563–567 (KLSKS). Residue lysine 566 coordinates ATP. A coiled-coil region spans residues 874-939 (EHLAKERVRL…QSILDKLASL (66 aa)).

This sequence belongs to the class-I aminoacyl-tRNA synthetase family. ValS type 1 subfamily. Monomer.

The protein localises to the cytoplasm. The catalysed reaction is tRNA(Val) + L-valine + ATP = L-valyl-tRNA(Val) + AMP + diphosphate. In terms of biological role, catalyzes the attachment of valine to tRNA(Val). As ValRS can inadvertently accommodate and process structurally similar amino acids such as threonine, to avoid such errors, it has a 'posttransfer' editing activity that hydrolyzes mischarged Thr-tRNA(Val) in a tRNA-dependent manner. This Chlamydia trachomatis serovar L2b (strain UCH-1/proctitis) protein is Valine--tRNA ligase.